Here is a 199-residue protein sequence, read N- to C-terminus: Transgelin-2 (199 aa).

N-acetylalanine is present on Ala-2. Ser-11 is modified (phosphoserine). N6-acetyllysine occurs at positions 17 and 20. The Calponin-homology (CH) domain maps to 24–136 (ADLEQILIQW…RTLMNLGGLA (113 aa)). A Phosphoserine modification is found at Ser-163. Lys-171 participates in a covalent cross-link: Glycyl lysine isopeptide (Lys-Gly) (interchain with G-Cter in SUMO2). The stretch at 174–199 (IGLQMGTNRGASQAGMTGYGMPRQIL) is one Calponin-like repeat. A Phosphothreonine modification is found at Thr-180. Omega-N-methylarginine is present on residues Arg-182 and Arg-196.

This sequence belongs to the calponin family. As to expression, expressed in epididymis (at protein level).

In Homo sapiens (Human), this protein is Transgelin-2 (TAGLN2).